Consider the following 457-residue polypeptide: 4-hydroxybenzoate transporter PcaK (457 aa).

Residues 1 to 34 (MPKEANMASQDYATQRSSLDAQALINDAPLSRYQ) are Cytoplasmic-facing. Residues 35–55 (WLIAIVCFLIVFVDGIDTAAM) form a helical membrane-spanning segment. The Periplasmic segment spans residues 56-72 (GFIAPALAQDWGVDRSQ). The chain crosses the membrane as a helical span at residues 73-93 (LGPVMSAALGGMIIGALVSGP). Over 94–101 (TADRFGRK) the chain is Cytoplasmic. A helical membrane pass occupies residues 102 to 122 (IVLSMSMLVFGGFTLACAYST). The Periplasmic segment spans residues 123–128 (NLDSLV). Residues 129–149 (IFRFLTGIGLGAAMPNATTLF) form a helical membrane-spanning segment. The Cytoplasmic segment spans residues 150–168 (SEYCPARIRSLLVTCMFCG). The chain crosses the membrane as a helical span at residues 169-189 (YNLGMAIGGFISSWLIPAFGW). Over 190-191 (HS) the chain is Periplasmic. The helical transmembrane segment at 192-212 (LFLLGGWAPLILMLLVIFFLP) threads the bilayer. At 213-274 (ESYRFLIVKG…LFSAKYVKGT (62 aa)) the chain is on the cytoplasmic side. Residues 275-295 (VLLWVTYFMGLVMIYLLTSWL) traverse the membrane as a helical segment. Residues 296–310 (PTLMRETGASLERAA) lie on the Periplasmic side of the membrane. The helical transmembrane segment at 311–331 (FLGGLFQFGGVLSALFIGWAM) threads the bilayer. Topologically, residues 332 to 338 (DRFNPNR) are cytoplasmic. Residues 339 to 359 (IIAGFYLAAGIFAVIVGQSLS) traverse the membrane as a helical segment. Residues 360-363 (NPTL) are Periplasmic-facing. Residues 364-384 (LALFILCAGIAVNGAQSSMPV) form a helical membrane-spanning segment. Residues 385 to 400 (LSARFYPTQCRATGVA) lie on the Cytoplasmic side of the membrane. The helical transmembrane segment at 401 to 421 (WMSGIGRFGAVFGAWIGAVLL) threads the bilayer. Residues 422–426 (GNNWS) are Periplasmic-facing. The chain crosses the membrane as a helical span at residues 427–447 (FTMILSMLIIPAAAAAIAIFV). Residues 448 to 457 (KSLVAHTDAT) lie on the Cytoplasmic side of the membrane.

This sequence belongs to the major facilitator superfamily. Aromatic acid:H(+) symporter (AAHS) (TC 2.A.1.15) family. Homotrimer.

It is found in the cell inner membrane. Functionally, uptake of 4-hydroxybenzoate (4-HB). Can also transport a variety of aromatic acids with hydroxyl substitutions at the 2-, 3- and 4-positions, such as salicylate, 2,4-dihydroxybenzoate, protocatechuate, 3-hydroxybenzoate, vanillate and gentisate. This is 4-hydroxybenzoate transporter PcaK from Acinetobacter baylyi (strain ATCC 33305 / BD413 / ADP1).